The sequence spans 380 residues: Cytochrome b (380 aa).

4 helical membrane-spanning segments follow: residues 34–54 (FGSLLGVCLIAQIATGLFLAM), 78–99 (WLLRNLHANGASFFFICIYFHI), 114–134 (WNIGVILLFLVMATAFVGYVL), and 179–199 (FFTFHFILPFIIAAASMIHLL). Histidine 84 and histidine 98 together coordinate heme b. 2 residues coordinate heme b: histidine 183 and histidine 197. Histidine 202 provides a ligand contact to a ubiquinone. Transmembrane regions (helical) follow at residues 227 to 247 (YKDLLGFVIMLGALASLSTFA), 289 to 309 (LGGVLALLLSIMVLFLMPIIH), 321 to 341 (IAKTFFWALIANTAILTWIGG), and 348 to 368 (FITIGQIASGLYFLIFVLLIP).

It belongs to the cytochrome b family. In terms of assembly, the cytochrome bc1 complex contains 3 respiratory subunits (MT-CYB, CYC1 and UQCRFS1), 2 core proteins (UQCRC1 and UQCRC2) and probably 6 low-molecular weight proteins. The cofactor is heme b.

It is found in the mitochondrion inner membrane. In terms of biological role, component of the ubiquinol-cytochrome c reductase complex (complex III or cytochrome b-c1 complex) that is part of the mitochondrial respiratory chain. The b-c1 complex mediates electron transfer from ubiquinol to cytochrome c. Contributes to the generation of a proton gradient across the mitochondrial membrane that is then used for ATP synthesis. The polypeptide is Cytochrome b (mt-cyb) (Pelophylax nigromaculatus (Black-spotted frog)).